The chain runs to 292 residues: MNERYELNKNLAQMLKGGVIMDVTTPEQAVIAEKAGAVAVMALERVPADIRARGGVARMSDPKIIKEIKAAVSIPVMAKVRIGHFVEAQILEALGIDFIDESEVLTPADEMYHIDKWAFKIPFVCGARNLGEALRRIGEGASMIRTKGEAGTGNVVEAVRHMRIINAEIKRLTTLREDELMAAAKELQAPYDLVKYVAQHGRLPVVNFAAGGIATPADAALMMQLGADGVFVGSGIFKSQNPEKMAEAIVKAVTYYDKPEILAEVSEGLGEAMQSIDIRKLDEKDLYASRGW.

A D-ribose 5-phosphate-binding site is contributed by D22. K79 serves as the catalytic Schiff-base intermediate with D-ribose 5-phosphate. Residue G151 participates in D-ribose 5-phosphate binding. R163 contacts D-glyceraldehyde 3-phosphate. Residues G212 and G233–S234 each bind D-ribose 5-phosphate.

It belongs to the PdxS/SNZ family. In terms of assembly, in the presence of PdxT, forms a dodecamer of heterodimers.

It carries out the reaction aldehydo-D-ribose 5-phosphate + D-glyceraldehyde 3-phosphate + L-glutamine = pyridoxal 5'-phosphate + L-glutamate + phosphate + 3 H2O + H(+). Its pathway is cofactor biosynthesis; pyridoxal 5'-phosphate biosynthesis. In terms of biological role, catalyzes the formation of pyridoxal 5'-phosphate from ribose 5-phosphate (RBP), glyceraldehyde 3-phosphate (G3P) and ammonia. The ammonia is provided by the PdxT subunit. Can also use ribulose 5-phosphate and dihydroxyacetone phosphate as substrates, resulting from enzyme-catalyzed isomerization of RBP and G3P, respectively. In Thermoanaerobacter sp. (strain X514), this protein is Pyridoxal 5'-phosphate synthase subunit PdxS.